Reading from the N-terminus, the 100-residue chain is MVPTSYYVLLSAILFTIGVLGVLLRRNAIVIFMSVELMLNAANLALVAFARERLGVEAQAIVFFVITVAAAEVAVGLALLVSIFRTKRTADVDEVSTLKG.

Transmembrane regions (helical) follow at residues 4-24 (TSYYVLLSAILFTIGVLGVLL), 29-49 (IVIFMSVELMLNAANLALVAF), and 61-81 (IVFFVITVAAAEVAVGLALLV).

The protein belongs to the complex I subunit 4L family. NDH-1 is composed of 14 different subunits. Subunits NuoA, H, J, K, L, M, N constitute the membrane sector of the complex.

Its subcellular location is the cell membrane. It catalyses the reaction a quinone + NADH + 5 H(+)(in) = a quinol + NAD(+) + 4 H(+)(out). Its function is as follows. NDH-1 shuttles electrons from NADH, via FMN and iron-sulfur (Fe-S) centers, to quinones in the respiratory chain. The immediate electron acceptor for the enzyme in this species is believed to be ubiquinone. Couples the redox reaction to proton translocation (for every two electrons transferred, four hydrogen ions are translocated across the cytoplasmic membrane), and thus conserves the redox energy in a proton gradient. This Chloroflexus aggregans (strain MD-66 / DSM 9485) protein is NADH-quinone oxidoreductase subunit K.